A 341-amino-acid polypeptide reads, in one-letter code: N-acetyl-gamma-glutamyl-phosphate reductase (341 aa).

The active site involves cysteine 163.

The protein belongs to the NAGSA dehydrogenase family. Type 1 subfamily.

It localises to the cytoplasm. It carries out the reaction N-acetyl-L-glutamate 5-semialdehyde + phosphate + NADP(+) = N-acetyl-L-glutamyl 5-phosphate + NADPH + H(+). The protein operates within amino-acid biosynthesis; L-arginine biosynthesis; N(2)-acetyl-L-ornithine from L-glutamate: step 3/4. Its function is as follows. Catalyzes the NADPH-dependent reduction of N-acetyl-5-glutamyl phosphate to yield N-acetyl-L-glutamate 5-semialdehyde. This chain is N-acetyl-gamma-glutamyl-phosphate reductase, found in Idiomarina loihiensis (strain ATCC BAA-735 / DSM 15497 / L2-TR).